A 293-amino-acid chain; its full sequence is Homeobox protein ceh-24 (293 aa).

Basic and acidic residues-rich tracts occupy residues 1-15 and 22-38; these read MSEK…KKDE and QETK…MKIK. Disordered stretches follow at residues 1–38 and 203–256; these read MSEK…MKIK and EKEK…SNGV. A DNA-binding region (homeobox) is located at residues 144–203; that stretch reads RRKRRVLFSQAQVYELERRFKQAKYLTAPEREQLANSIRLTPTQVKIWFQNHRYKCKRQE.

The protein belongs to the NK-2 homeobox family. In terms of tissue distribution, expressed in the 8 vulval muscles, 8-10 ventral neurons in the head and in the most posterior pharyngeal muscle cell, m8.

It localises to the nucleus. In terms of biological role, probable transcriptional regulator that is required in neural development for the normal formation of sublateral cholinergic motor neuron processes. Plays a role in regulating the expression of acetylcholine transporter protein unc-17 in the sublateral processes. In particular, it is required in sublateral motor neurons for a left-right turning behavior that occurs during the lethargus phase of the normal sleep process called 'flipping'. During 'flipping' animals rotate 180 degrees about their longitudinal axis. This Caenorhabditis briggsae protein is Homeobox protein ceh-24.